We begin with the raw amino-acid sequence, 84 residues long: uncharacterized protein (84 aa).

Residues 25 to 45 form a helical membrane-spanning segment; sequence ILMTVAGFIIAFAILVFQISF.

It localises to the membrane. This is an uncharacterized protein from Bacillus anthracis.